Reading from the N-terminus, the 123-residue chain is MARIAGVDLPRDKRVEVGLTYIFGIGRKTSNNILAAAGINPDTRIKDLTEEEVNNLRRIIDADHHVEGDLRREIALNIKRLKEIRCYRGIRHIKGLPVRGQKTKTNARTRKGPKKTVGRKKKK.

A disordered region spans residues 97–123 (PVRGQKTKTNARTRKGPKKTVGRKKKK). Over residues 101-123 (QKTKTNARTRKGPKKTVGRKKKK) the composition is skewed to basic residues.

Belongs to the universal ribosomal protein uS13 family. Part of the 30S ribosomal subunit. Forms a loose heterodimer with protein S19. Forms two bridges to the 50S subunit in the 70S ribosome.

Its function is as follows. Located at the top of the head of the 30S subunit, it contacts several helices of the 16S rRNA. In the 70S ribosome it contacts the 23S rRNA (bridge B1a) and protein L5 of the 50S subunit (bridge B1b), connecting the 2 subunits; these bridges are implicated in subunit movement. Contacts the tRNAs in the A and P-sites. This is Small ribosomal subunit protein uS13 from Alkaliphilus oremlandii (strain OhILAs) (Clostridium oremlandii (strain OhILAs)).